Consider the following 1088-residue polypeptide: RNA-directed RNA polymerase (1088 aa).

Residues 501-687 (LSYGDVTRFL…AKRYIAGGKI (187 aa)) enclose the RdRp catalytic domain.

It belongs to the reoviridae RNA-directed RNA polymerase family. Interacts with VP3 (Potential). Interacts with VP2; this interaction activates VP1. Interacts with NSP5; this interaction is probably necessary for the formation of functional virus factories. Interacts with NSP2; this interaction is weak. Mg(2+) serves as cofactor.

It is found in the virion. It catalyses the reaction RNA(n) + a ribonucleoside 5'-triphosphate = RNA(n+1) + diphosphate. Its function is as follows. RNA-directed RNA polymerase that is involved in both transcription and genome replication. Together with VP3 capping enzyme, forms an enzyme complex positioned near the channels situated at each of the five-fold vertices of the core. Following infection, the outermost layer of the virus is lost, leaving a double-layered particle (DLP) made up of the core and VP6 shell. VP1 then catalyzes the transcription of fully conservative plus-strand genomic RNAs that are extruded through the DLP's channels into the cytoplasm where they function as mRNAs for translation of viral proteins. One copy of each of the viral (+)RNAs is also recruited during core assembly, together with newly synthesized polymerase complexes and VP2. The polymerase of these novo-formed particles catalyzes the synthesis of complementary minus-strands leading to dsRNA formation. To do so, the polymerase specifically recognizes and binds 4 bases 5'-UGUG-3' in the conserved 3'-sequence of plus-strand RNA templates. VP2 presumably activates the autoinhibited VP1-RNA complex to coordinate packaging and genome replication. Once dsRNA synthesis is complete, the polymerase switches to the transcriptional mode, thus providing secondary transcription. This Homo sapiens (Human) protein is RNA-directed RNA polymerase.